A 130-amino-acid chain; its full sequence is Small ribosomal subunit protein uS9 (130 aa).

The protein belongs to the universal ribosomal protein uS9 family.

This chain is Small ribosomal subunit protein uS9, found in Bacillus velezensis (strain DSM 23117 / BGSC 10A6 / LMG 26770 / FZB42) (Bacillus amyloliquefaciens subsp. plantarum).